The sequence spans 353 residues: tRNA-specific 2-thiouridylase MnmA 2 (353 aa).

ATP-binding positions include 9-16 and Met35; that span reads AMSGGVDS. Cys98 serves as the catalytic Nucleophile. Cysteines 98 and 194 form a disulfide. Gly122 serves as a coordination point for ATP. The interaction with tRNA stretch occupies residues 144–146; that stretch reads KDQ. The active-site Cysteine persulfide intermediate is Cys194. The interval 300–301 is interaction with tRNA; sequence RY.

The protein belongs to the MnmA/TRMU family.

The protein resides in the cytoplasm. It catalyses the reaction S-sulfanyl-L-cysteinyl-[protein] + uridine(34) in tRNA + AH2 + ATP = 2-thiouridine(34) in tRNA + L-cysteinyl-[protein] + A + AMP + diphosphate + H(+). Its function is as follows. Catalyzes the 2-thiolation of uridine at the wobble position (U34) of tRNA, leading to the formation of s(2)U34. This Clostridium botulinum (strain Loch Maree / Type A3) protein is tRNA-specific 2-thiouridylase MnmA 2.